The following is a 29-amino-acid chain: Brevinin-2Rd (29 aa).

C23 and C29 are disulfide-bonded.

Expressed by the skin glands.

Its subcellular location is the secreted. Its function is as follows. Antimicrobial peptide. The polypeptide is Brevinin-2Rd (Pelophylax ridibundus (Marsh frog)).